A 316-amino-acid polypeptide reads, in one-letter code: Ribosomal RNA small subunit methyltransferase H (316 aa).

S-adenosyl-L-methionine-binding positions include 35-37 (GGH), aspartate 55, phenylalanine 79, aspartate 101, and glutamine 108.

This sequence belongs to the methyltransferase superfamily. RsmH family.

The protein resides in the cytoplasm. The catalysed reaction is cytidine(1402) in 16S rRNA + S-adenosyl-L-methionine = N(4)-methylcytidine(1402) in 16S rRNA + S-adenosyl-L-homocysteine + H(+). Specifically methylates the N4 position of cytidine in position 1402 (C1402) of 16S rRNA. This chain is Ribosomal RNA small subunit methyltransferase H, found in Vibrio campbellii (strain ATCC BAA-1116).